The following is a 362-amino-acid chain: Molybdenum import ATP-binding protein ModC (362 aa).

Positions 4–238 (AGEAAIRARF…LDLPIRLGED (235 aa)) constitute an ABC transporter domain. 38 to 45 (GHSGSGKT) contributes to the ATP binding site. The 66-residue stretch at 297–362 (GTSILNTLPA…AQIKAVALVG (66 aa)) folds into the Mop domain.

Belongs to the ABC transporter superfamily. Molybdate importer (TC 3.A.1.8) family. As to quaternary structure, the complex is composed of two ATP-binding proteins (ModC), two transmembrane proteins (ModB) and a solute-binding protein (ModA).

The protein resides in the cell inner membrane. It carries out the reaction molybdate(out) + ATP + H2O = molybdate(in) + ADP + phosphate + H(+). Functionally, part of the ABC transporter complex ModABC involved in molybdenum import. Responsible for energy coupling to the transport system. The sequence is that of Molybdenum import ATP-binding protein ModC from Thiobacillus denitrificans (strain ATCC 25259 / T1).